A 305-amino-acid polypeptide reads, in one-letter code: NADH-cytochrome b5 reductase 1 (305 aa).

A helical transmembrane segment spans residues 8 to 28 (VLLASLGVGLVTLLGLAVGSY). In terms of domain architecture, FAD-binding FR-type spans 44–156 (NEKYLLRLLD…RGPSGLLTYT (113 aa)). Residues 136-166 (DSLKVGDVVEFRGPSGLLTYTGKGHFNIQPN) and 175-210 (VAKKLGMIAGGTGITPMLQLIRAILKVPEDPTQCFL) each bind FAD.

This sequence belongs to the flavoprotein pyridine nucleotide cytochrome reductase family. Requires FAD as cofactor. Widely expressed.

It is found in the membrane. The enzyme catalyses 2 Fe(III)-[cytochrome b5] + NADH = 2 Fe(II)-[cytochrome b5] + NAD(+) + H(+). Functionally, NADH-cytochrome b5 reductases are involved in desaturation and elongation of fatty acids, cholesterol biosynthesis, drug metabolism, and, in erythrocyte, methemoglobin reduction. The polypeptide is NADH-cytochrome b5 reductase 1 (CYB5R1) (Homo sapiens (Human)).